A 170-amino-acid polypeptide reads, in one-letter code: ATP synthase subunit b (170 aa).

A helical membrane pass occupies residues 22-41; sequence ILNWAVVVFGLYKFLPGFLG. The disordered stretch occupies residues 76 to 98; that stretch reads LSSAAEKASQIKADSLKRSESIR. Over residues 89-98 the composition is skewed to basic and acidic residues; that stretch reads DSLKRSESIR.

This sequence belongs to the ATPase B chain family. In terms of assembly, F-type ATPases have 2 components, F(1) - the catalytic core - and F(0) - the membrane proton channel. F(1) has five subunits: alpha(3), beta(3), gamma(1), delta(1), epsilon(1). F(0) has four main subunits: a(1), b(1), b'(1) and c(10-14). The alpha and beta chains form an alternating ring which encloses part of the gamma chain. F(1) is attached to F(0) by a central stalk formed by the gamma and epsilon chains, while a peripheral stalk is formed by the delta, b and b' chains.

The protein localises to the cellular thylakoid membrane. Its function is as follows. F(1)F(0) ATP synthase produces ATP from ADP in the presence of a proton or sodium gradient. F-type ATPases consist of two structural domains, F(1) containing the extramembraneous catalytic core and F(0) containing the membrane proton channel, linked together by a central stalk and a peripheral stalk. During catalysis, ATP synthesis in the catalytic domain of F(1) is coupled via a rotary mechanism of the central stalk subunits to proton translocation. Functionally, component of the F(0) channel, it forms part of the peripheral stalk, linking F(1) to F(0). This chain is ATP synthase subunit b, found in Prochlorococcus marinus (strain AS9601).